A 444-amino-acid chain; its full sequence is CCA-adding enzyme (444 aa).

Positions 57 and 60 each coordinate ATP. CTP contacts are provided by Ser57 and Arg60. Positions 69, 71, and 124 each coordinate Mg(2+). His147, Lys168, and Tyr177 together coordinate ATP. The CTP site is built by His147, Lys168, and Tyr177.

Belongs to the tRNA nucleotidyltransferase/poly(A) polymerase family. Archaeal CCA-adding enzyme subfamily. As to quaternary structure, homodimer. Mg(2+) is required as a cofactor.

It catalyses the reaction a tRNA precursor + 2 CTP + ATP = a tRNA with a 3' CCA end + 3 diphosphate. It carries out the reaction a tRNA with a 3' CCA end + 2 CTP + ATP = a tRNA with a 3' CCACCA end + 3 diphosphate. Its function is as follows. Catalyzes the addition and repair of the essential 3'-terminal CCA sequence in tRNAs without using a nucleic acid template. Adds these three nucleotides in the order of C, C, and A to the tRNA nucleotide-73, using CTP and ATP as substrates and producing inorganic pyrophosphate. tRNA 3'-terminal CCA addition is required both for tRNA processing and repair. Also involved in tRNA surveillance by mediating tandem CCA addition to generate a CCACCA at the 3' terminus of unstable tRNAs. While stable tRNAs receive only 3'-terminal CCA, unstable tRNAs are marked with CCACCA and rapidly degraded. In Methanococcus maripaludis (strain C7 / ATCC BAA-1331), this protein is CCA-adding enzyme.